A 482-amino-acid chain; its full sequence is Cytochrome P450 monooxygenase pynD (482 aa).

The signal sequence occupies residues 1–22 (MWRIPVIVALVAGLLYWVRKQG). Residue N401 is glycosylated (N-linked (GlcNAc...) asparagine). C417 serves as a coordination point for heme.

This sequence belongs to the cytochrome P450 family. The cofactor is heme.

It functions in the pathway secondary metabolite biosynthesis. Cytochrome P450 monooxygenase; part of the gene cluster that mediates the biosynthesis of pyranonigrins, a family of antioxidative compounds. The first step of pyranonigrins biosynthesis is performed by the hybrid PKS-NRPS synthetase that condenses 6 malonyl-CoA units to an acetyl starter unit, to form a 1,3,5-trioxotetradecane-6,8-dienyl-ACP. The enoyl reductase (ER) domain of pynA is likely to be functional during the first two rounds of polyketide chain extension, to generate the saturated C-C bonds of the alkyl side chain. PynA subsequently forms the amide bond between the acyl chain and L-serine. Although pynA has a terminal reductase domain, it appears to require the thioesterase pynI for the release of the straight-chain intermediate from pynA via the formation of a tetramic acid pyranonigrin J. The methyltransferase pynC then coverts pyranonigrin J to pyranonigrin I via N-methylation. The FAD-dependent monooxygenase pynG catalyzes an epoxidation-mediated cyclization to form the dihydro-gamma-pyrone moiety, followed by pynD-catalyzed oxidation of the alcohol to the ketone and enolization to yield the characteristic tetramic acid-fused gamma-pyrone core of pyranonigrin H. Pyranonigrin H is substrate of pynH for dehydration-mediated exo-methylene formation from the serine side chain to produce pyranonigrin E, before the oxidase pynE reduces the exo-methylene of pyranonigrin E into a pendant methyl to form pyranonigrin G. The FAD-linked oxidoreductase pynB performs the reverse reaction and converts pyranonigrin G back to pyranonigrin E. In Aspergillus niger (strain ATCC MYA-4892 / CBS 513.88 / FGSC A1513), this protein is Cytochrome P450 monooxygenase pynD.